The sequence spans 362 residues: UDP-3-O-acylglucosamine N-acyltransferase (362 aa).

H251 functions as the Proton acceptor in the catalytic mechanism.

Belongs to the transferase hexapeptide repeat family. LpxD subfamily. Homotrimer.

It catalyses the reaction a UDP-3-O-[(3R)-3-hydroxyacyl]-alpha-D-glucosamine + a (3R)-hydroxyacyl-[ACP] = a UDP-2-N,3-O-bis[(3R)-3-hydroxyacyl]-alpha-D-glucosamine + holo-[ACP] + H(+). Its pathway is bacterial outer membrane biogenesis; LPS lipid A biosynthesis. Catalyzes the N-acylation of UDP-3-O-acylglucosamine using 3-hydroxyacyl-ACP as the acyl donor. Is involved in the biosynthesis of lipid A, a phosphorylated glycolipid that anchors the lipopolysaccharide to the outer membrane of the cell. The sequence is that of UDP-3-O-acylglucosamine N-acyltransferase from Cupriavidus pinatubonensis (strain JMP 134 / LMG 1197) (Cupriavidus necator (strain JMP 134)).